A 238-amino-acid chain; its full sequence is Octanoyltransferase (238 aa).

Positions 44 to 224 (AGGPDSLLLL…AVLDALDGRI (181 aa)) constitute a BPL/LPL catalytic domain. Substrate contacts are provided by residues 82 to 89 (RGGKITWH), 154 to 156 (AIG), and 167 to 169 (GFA). The Acyl-thioester intermediate role is filled by Cys-185.

It belongs to the LipB family.

The protein localises to the cytoplasm. It catalyses the reaction octanoyl-[ACP] + L-lysyl-[protein] = N(6)-octanoyl-L-lysyl-[protein] + holo-[ACP] + H(+). Its pathway is protein modification; protein lipoylation via endogenous pathway; protein N(6)-(lipoyl)lysine from octanoyl-[acyl-carrier-protein]: step 1/2. Catalyzes the transfer of endogenously produced octanoic acid from octanoyl-acyl-carrier-protein onto the lipoyl domains of lipoate-dependent enzymes. Lipoyl-ACP can also act as a substrate although octanoyl-ACP is likely to be the physiological substrate. In Mycolicibacterium gilvum (strain PYR-GCK) (Mycobacterium gilvum (strain PYR-GCK)), this protein is Octanoyltransferase.